A 287-amino-acid polypeptide reads, in one-letter code: Thioredoxin-related transmembrane protein 2 (287 aa).

The N-terminal stretch at 1–13 is a signal peptide; the sequence is MAVLAPLLAVLYA. Over 14–112 the chain is Extracellular; that stretch reads APGLLRWVSQ…ILFFRLDLRM (99 aa). A helical membrane pass occupies residues 113–133; that stretch reads GLLYITLCIVFLMTCKPPLYL. The Cytoplasmic segment spans residues 134–287; the sequence is GPEHIKYFSD…NEWNDGKKDQ (154 aa). The region spanning 137-209 is the Thioredoxin domain; that stretch reads HIKYFSDKTL…PEVSCRYSIS (73 aa). Residues 284–287 carry the Di-lysine motif motif; it reads KKDQ.

In terms of assembly, monomer. Homodimer; disulfide-linked. Occurs in both reduced and oxidized monomeric form. Oxidative conditions increase homodimerization.

The protein localises to the endoplasmic reticulum membrane. Its subcellular location is the mitochondrion membrane. Endoplasmic reticulum and mitochondria-associated protein that probably functions as a regulator of cellular redox state and thereby regulates protein post-translational modification, protein folding and mitochondrial activity. In Xenopus laevis (African clawed frog), this protein is Thioredoxin-related transmembrane protein 2 (tmx2).